We begin with the raw amino-acid sequence, 788 residues long: Pre-rRNA-processing protein TSR1 homolog (788 aa).

Residues 1–40 form a disordered region; sequence MSTTGHRAGVFKKPAKPHKSWKGKRTKGEITTENRGREGV. The segment covering 9–25 has biased composition (basic residues); sequence GVFKKPAKPHKSWKGKR. Over residues 26-40 the composition is skewed to basic and acidic residues; that stretch reads TKGEITTENRGREGV. In terms of domain architecture, Bms1-type G spans 83–243; that stretch reads APCLVTILSL…LRTLNETKKK (161 aa). Residues 354–433 are disordered; that stretch reads LEEADKEMRR…ASEMMFHDEI (80 aa). Acidic residues predominate over residues 378 to 412; sequence DDSEDDEDEEDEDEDMDDEEEDKDLEEDDEEEDTP.

It belongs to the TRAFAC class translation factor GTPase superfamily. Bms1-like GTPase family. TSR1 subfamily.

The protein resides in the nucleus. Its subcellular location is the nucleolus. Its function is as follows. Required during maturation of the 40S ribosomal subunit in the nucleolus. The sequence is that of Pre-rRNA-processing protein TSR1 homolog from Caenorhabditis briggsae.